The primary structure comprises 337 residues: MDKPRILSGVQPTGNLHLGNYLGAIRSWVEQQQHYDNFFCVVDLHAITVPHNPQTLAQDTLTIAALYLACGIDLQYSTIFVQSHVAAHSELAWLLNCVTPLNWLERMIQFKEKAVKQGENVSVGLLDYPVLMAADILLYDADKVPVGEDQKQHLELTRDIVIRINDKFGREDAPVLKLPEPLIRKEGARVMSLADGTKKMSKSDESELSRINLLDPPEMIKKKVKKCKTDPQRGLWFDDPERPECHNLLTLYTLLSNQTKEAVAQECAEMGWGQFKPLLTETAIAALEPIQAKYAEILADRGELDRIIQAGNAKASQTAQQTLARVRDALGFLAPPY.

ATP-binding positions include 11–13 (QPT) and 19–20 (GN). The short motif at 12 to 20 (PTGNLHLGN) is the 'HIGH' region element. Asp135 provides a ligand contact to L-tryptophan. Residues 147-149 (GED), Val190, and 199-203 (KMSKS) contribute to the ATP site. Positions 199-203 (KMSKS) match the 'KMSKS' region motif.

Belongs to the class-I aminoacyl-tRNA synthetase family. Homodimer.

The protein resides in the cytoplasm. The enzyme catalyses tRNA(Trp) + L-tryptophan + ATP = L-tryptophyl-tRNA(Trp) + AMP + diphosphate + H(+). In terms of biological role, catalyzes the attachment of tryptophan to tRNA(Trp). This Synechocystis sp. (strain ATCC 27184 / PCC 6803 / Kazusa) protein is Tryptophan--tRNA ligase.